The primary structure comprises 959 residues: Bifunctional premutilin synthase (959 aa).

The class II diterpene cyclase stretch occupies residues 1–542 (MGLSEDLHAR…ALNVPIPRFD (542 aa)). Residues 309-312 (DADM) carry the DXDD motif motif. Catalysis depends on D311, which acts as the For class II diterpene cyclase activity. The tract at residues 543–959 (PSSISTLPAI…TANGSNGIHH (417 aa)) is class I diterpene synthase. D649 functions as the For class I diterpene synthase activity in the catalytic mechanism. D649, D653, and N824 together coordinate Mg(2+). The DDXXD motif signature appears at 649–653 (DDYLD). The tract at residues 931–959 (KGTNGVKKINGSSTNGTKVTANGSNGIHH) is disordered. Polar residues predominate over residues 940–959 (NGSSTNGTKVTANGSNGIHH).

It belongs to the terpene synthase family. It depends on Mg(2+) as a cofactor.

It functions in the pathway secondary metabolite biosynthesis; terpenoid biosynthesis. In terms of biological role, bifunctional premutilin synthase; part of the gene cluster that mediates the biosynthesis of pleuromutilin, a tricyclic diterpene showing antibacterial properties. The geranylgeranyl diphosphate (GGPP) synthase catalyzes the first step in pleuromutilin biosynthesis. GGPP is then substrate of the premutilin synthase (PS) to yield premutilin. Premutilin synthase is a bifunctional enzyme composed of the fusion of a class II diterpene cyclase (DTC) and a class I diterpene synthase (DTS), with the corresponding domains and active sites containing characteristic aspartate-rich motifs. GGPP is first converted to mutildienyl-diphosphate (MPP) at the class II DTC site. MPP is subsequently further cyclized at the class I DTS site, followed by a 1,5-hydride shift and addition of water prior to terminating deprotonation, to yield premutilin. In addition to the aforementioned GGPP synthase and bifunctional diterpene synthase, the cluster also contains three cytochrome P450 monooxygenases, a short-chain alcohol dehydrogenase, and an acyltransferase, involved in the conversion of premutilin to pleuromutilin. The cytochrome P450 monooxygenases P450-1 and P450-2 hydroxylate premutilin at C-11 and C-3, respectively, producing 11-hydroxypremutilin and 3-hydroxypremutilin. The combination of the actions of both ple5 and ple6 leads to the production of 3,11-dihydroxypremutilin. The short chain dehydrogenase SDR further converts 3,11-dihydroxypremutilin into mutilin. The acetyltransferase ATF then acetylates mutilin to produce 14-O-acetylmutilin. Finally, the cytochrome P450 monooxygenase P450-3 catalyzes hydroxylation on the alpha position of the acetyl side chain of 14-O-acetylmutilin to yield pleuromutilin. The chain is Bifunctional premutilin synthase from Clitopilus passeckerianus (Pleurotus passeckerianus).